The primary structure comprises 229 residues: Leucyl/phenylalanyl-tRNA--protein transferase (229 aa).

This sequence belongs to the L/F-transferase family.

It is found in the cytoplasm. It carries out the reaction N-terminal L-lysyl-[protein] + L-leucyl-tRNA(Leu) = N-terminal L-leucyl-L-lysyl-[protein] + tRNA(Leu) + H(+). The catalysed reaction is N-terminal L-arginyl-[protein] + L-leucyl-tRNA(Leu) = N-terminal L-leucyl-L-arginyl-[protein] + tRNA(Leu) + H(+). It catalyses the reaction L-phenylalanyl-tRNA(Phe) + an N-terminal L-alpha-aminoacyl-[protein] = an N-terminal L-phenylalanyl-L-alpha-aminoacyl-[protein] + tRNA(Phe). Its function is as follows. Functions in the N-end rule pathway of protein degradation where it conjugates Leu, Phe and, less efficiently, Met from aminoacyl-tRNAs to the N-termini of proteins containing an N-terminal arginine or lysine. The protein is Leucyl/phenylalanyl-tRNA--protein transferase of Pseudomonas syringae pv. syringae (strain B728a).